The primary structure comprises 116 residues: MRHQCRVPQLGRPADQRKAMLRALTTQLIREGRVTTTKARAKALRDEAERMITLAKDGSLASRRRAIGYIYDKQLVHALFDKAPTRYGERKGGYTRITRTVPRRGDNAEMAIIELV.

The protein belongs to the bacterial ribosomal protein bL17 family. Part of the 50S ribosomal subunit. Contacts protein L32.

In Synechococcus sp. (strain CC9902), this protein is Large ribosomal subunit protein bL17.